Consider the following 719-residue polypeptide: Fatty acid oxidation complex subunit alpha (719 aa).

The enoyl-CoA hydratase/isomerase stretch occupies residues 1 to 190 (MIYQGNRITV…KLGLVDAVVA (190 aa)). Aspartate 298 is a substrate binding site. Residues 313-719 (HDINEAAVLG…AAGETFYPKA (407 aa)) are 3-hydroxyacyl-CoA dehydrogenase. NAD(+) is bound by residues methionine 326, aspartate 345, 402 to 404 (VVE), lysine 409, and serine 431. Residue histidine 452 is the For 3-hydroxyacyl-CoA dehydrogenase activity of the active site. Asparagine 455 serves as a coordination point for NAD(+). Asparagine 502 serves as a coordination point for substrate.

The protein in the N-terminal section; belongs to the enoyl-CoA hydratase/isomerase family. It in the C-terminal section; belongs to the 3-hydroxyacyl-CoA dehydrogenase family. Heterotetramer of two alpha chains (FadB) and two beta chains (FadA).

The enzyme catalyses a (3S)-3-hydroxyacyl-CoA + NAD(+) = a 3-oxoacyl-CoA + NADH + H(+). The catalysed reaction is a (3S)-3-hydroxyacyl-CoA = a (2E)-enoyl-CoA + H2O. It carries out the reaction a 4-saturated-(3S)-3-hydroxyacyl-CoA = a (3E)-enoyl-CoA + H2O. It catalyses the reaction (3S)-3-hydroxybutanoyl-CoA = (3R)-3-hydroxybutanoyl-CoA. The enzyme catalyses a (3Z)-enoyl-CoA = a 4-saturated (2E)-enoyl-CoA. The catalysed reaction is a (3E)-enoyl-CoA = a 4-saturated (2E)-enoyl-CoA. The protein operates within lipid metabolism; fatty acid beta-oxidation. Its function is as follows. Involved in the aerobic and anaerobic degradation of long-chain fatty acids via beta-oxidation cycle. Catalyzes the formation of 3-oxoacyl-CoA from enoyl-CoA via L-3-hydroxyacyl-CoA. It can also use D-3-hydroxyacyl-CoA and cis-3-enoyl-CoA as substrate. The chain is Fatty acid oxidation complex subunit alpha from Psychrobacter sp. (strain PRwf-1).